Reading from the N-terminus, the 258-residue chain is Hydroxyacylglutathione hydrolase (258 aa).

Residues His52, His54, Asp56, His57, His109, Asp126, and His164 each coordinate Zn(2+).

Belongs to the metallo-beta-lactamase superfamily. Glyoxalase II family. In terms of assembly, monomer. Zn(2+) serves as cofactor.

The catalysed reaction is an S-(2-hydroxyacyl)glutathione + H2O = a 2-hydroxy carboxylate + glutathione + H(+). It functions in the pathway secondary metabolite metabolism; methylglyoxal degradation; (R)-lactate from methylglyoxal: step 2/2. Functionally, thiolesterase that catalyzes the hydrolysis of S-D-lactoyl-glutathione to form glutathione and D-lactic acid. In Xylella fastidiosa (strain 9a5c), this protein is Hydroxyacylglutathione hydrolase.